Consider the following 248-residue polypeptide: Probable transcriptional regulatory protein LAR_0538 (248 aa).

A disordered region spans residues 1-22 (MSGHSKWHNIQGRKNAQDAKRG).

It belongs to the TACO1 family.

It localises to the cytoplasm. This is Probable transcriptional regulatory protein LAR_0538 from Limosilactobacillus reuteri subsp. reuteri (strain JCM 1112) (Lactobacillus reuteri).